The sequence spans 1094 residues: Potassium-transporting ATPase alpha chain 2 (1094 aa).

A compositionally biased stretch (basic and acidic residues) spans M1–G21. The segment at M1 to C37 is disordered. Positions S28–C37 are enriched in pro residues. The Cytoplasmic segment spans residues R56–P157. Residues E158 to A178 form a helical membrane-spanning segment. Over V179–Y201 the chain is Lumenal. Residues L202–A222 form a helical membrane-spanning segment. Residues K223–I358 are Cytoplasmic-facing. Positions S286–N305 are disordered. A helical transmembrane segment spans residues E359 to I378. Over I379–A390 the chain is Lumenal. A helical transmembrane segment spans residues I391 to A408. At T409–L842 the chain is on the cytoplasmic side. The 4-aspartylphosphate intermediate role is filled by D446. Mg(2+)-binding residues include D787 and D791. The chain crosses the membrane as a helical span at residues K843–I862. Over Y863 to I872 the chain is Lumenal. The helical transmembrane segment at G873–A893 threads the bilayer. Residues Y894–R913 are Cytoplasmic-facing. The chain crosses the membrane as a helical span at residues L914–F936. The Lumenal segment spans residues L937–G988. A helical membrane pass occupies residues Y989 to K1008. The Cytoplasmic portion of the chain corresponds to T1009–N1022. At S1013 the chain carries Phosphoserine; by PKA. A helical transmembrane segment spans residues K1023–Y1041. Topologically, residues G1042–A1056 are lumenal. Residues Q1057–K1077 traverse the membrane as a helical segment. At L1078 to Y1094 the chain is on the cytoplasmic side.

It belongs to the cation transport ATPase (P-type) (TC 3.A.3) family. Type IIC subfamily. The X(+)/K(+) ATPase pump is composed of a catalytic alpha subunit and an auxiliary non-catalytic beta subunit. The alpha subunit pairs with the beta subunit of gastric H(+)/K(+) ATPase ATP4B or the beta subunit of Na(+)/K(+) ATPases ATP1B1 and ATP1B3; this interaction is required for the formation of a functionally active pump and its targeting at the plasma membrane. As to expression, found in the skin, kidney, distal colon and brain. In the kidney it is found in the connecting tubule, cortical collecting duct and outer medullary collecting duct while in the brain it is specific to choroid plexus and cortex.

The protein localises to the apical cell membrane. The catalysed reaction is K(+)(out) + ATP + H2O + H(+)(in) = K(+)(in) + ADP + phosphate + 2 H(+)(out). It carries out the reaction K(+)(out) + Na(+)(in) + ATP + H2O = K(+)(in) + Na(+)(out) + ADP + phosphate + H(+). Functionally, the catalytic subunit of a H(+)/K(+) ATPase and/or Na(+)/K(+) ATPase pump which transports K(+) ions in exchange for Na(+) and/or H(+) ions across the apical membrane of epithelial cells. Uses ATP as an energy source to pump K(+) ions into the cell while transporting Na(+) and/or H(+) ions to the extracellular compartment. Involved in the maintenance of electrolyte homeostasis through K(+) ion absorption in kidney and colon. In the airway epithelium, may play a primary role in mucus acidification regulating its viscosity and clearance. This is Potassium-transporting ATPase alpha chain 2 (ATP12A) from Oryctolagus cuniculus (Rabbit).